A 387-amino-acid polypeptide reads, in one-letter code: UDP-N-acetylglucosamine--N-acetylmuramyl-(pentapeptide) pyrophosphoryl-undecaprenol N-acetylglucosamine transferase (387 aa).

UDP-N-acetyl-alpha-D-glucosamine is bound by residues 23 to 25, asparagine 135, arginine 174, serine 203, isoleucine 261, 280 to 285, and glutamine 306; these read TGG and ALTVSE.

This sequence belongs to the glycosyltransferase 28 family. MurG subfamily.

It is found in the cell inner membrane. It catalyses the reaction di-trans,octa-cis-undecaprenyl diphospho-N-acetyl-alpha-D-muramoyl-L-alanyl-D-glutamyl-meso-2,6-diaminopimeloyl-D-alanyl-D-alanine + UDP-N-acetyl-alpha-D-glucosamine = di-trans,octa-cis-undecaprenyl diphospho-[N-acetyl-alpha-D-glucosaminyl-(1-&gt;4)]-N-acetyl-alpha-D-muramoyl-L-alanyl-D-glutamyl-meso-2,6-diaminopimeloyl-D-alanyl-D-alanine + UDP + H(+). Its pathway is cell wall biogenesis; peptidoglycan biosynthesis. Cell wall formation. Catalyzes the transfer of a GlcNAc subunit on undecaprenyl-pyrophosphoryl-MurNAc-pentapeptide (lipid intermediate I) to form undecaprenyl-pyrophosphoryl-MurNAc-(pentapeptide)GlcNAc (lipid intermediate II). This Colwellia psychrerythraea (strain 34H / ATCC BAA-681) (Vibrio psychroerythus) protein is UDP-N-acetylglucosamine--N-acetylmuramyl-(pentapeptide) pyrophosphoryl-undecaprenol N-acetylglucosamine transferase.